Here is a 570-residue protein sequence, read N- to C-terminus: Sulfite reductase [NADPH] hemoprotein beta-component (570 aa).

[4Fe-4S] cluster-binding residues include cysteine 434, cysteine 440, cysteine 479, and cysteine 483. Cysteine 483 is a siroheme binding site.

The protein belongs to the nitrite and sulfite reductase 4Fe-4S domain family. As to quaternary structure, alpha(8)-beta(8). The alpha component is a flavoprotein, the beta component is a hemoprotein. Siroheme serves as cofactor. [4Fe-4S] cluster is required as a cofactor.

It catalyses the reaction hydrogen sulfide + 3 NADP(+) + 3 H2O = sulfite + 3 NADPH + 4 H(+). Its pathway is sulfur metabolism; hydrogen sulfide biosynthesis; hydrogen sulfide from sulfite (NADPH route): step 1/1. In terms of biological role, component of the sulfite reductase complex that catalyzes the 6-electron reduction of sulfite to sulfide. This is one of several activities required for the biosynthesis of L-cysteine from sulfate. The protein is Sulfite reductase [NADPH] hemoprotein beta-component of Salmonella schwarzengrund (strain CVM19633).